Here is an 82-residue protein sequence, read N- to C-terminus: Musculoskeletal embryonic nuclear protein 1 (82 aa).

Disordered stretches follow at residues 1 to 33 (MSQA…LTKN) and 49 to 82 (QAGS…SVFG). A Phosphoserine modification is found at serine 2. The Nuclear localization signal motif lies at 10–18 (PIKKKRPPV).

Belongs to the MUSTN1 family. Expression in skeletal muscle is reduced during limb unloading but increases during the active recovery phase that follows.

The protein resides in the nucleus. It is found in the cytoplasm. The protein localises to the secreted. It localises to the extracellular space. Required for chondrocyte development and proliferation. Plays a role in myoblast differentiation and fusion. Modulates skeletal muscle extracellular matrix composition. Plays a role in skeletal muscle function. Plays a role in glucose homeostasis. In Homo sapiens (Human), this protein is Musculoskeletal embryonic nuclear protein 1 (MUSTN1).